The sequence spans 294 residues: Putative ribose uptake protein RbsU (294 aa).

10 helical membrane passes run 5-24, 34-56, 61-80, 90-112, 121-138, 153-170, 182-204, 214-236, 243-265, and 275-292; these read ALLI…TIAS, ILGS…GIAF, NLWF…IVTF, RAMP…FALG, VLGG…WLTV, QAVI…AYSA, AFVP…LASR, VSYT…LISA, LATG…IWFL, and WVTI…AVTV.

Belongs to the GRP transporter (TC 2.A.7.5) family.

The protein resides in the cell membrane. Its function is as follows. Could be involved in the uptake of ribose. The sequence is that of Putative ribose uptake protein RbsU (rbsU) from Lactiplantibacillus plantarum (strain ATCC BAA-793 / NCIMB 8826 / WCFS1) (Lactobacillus plantarum).